The chain runs to 672 residues: MANLIRTDHQQHIPKKRKRGESRVFRLKTFGESGHPAEMNELSFRDNLAKLLEFGHFESSGLMGSWSFQLEIQRNPNPLYVLLFVVEEPIEASLNLRCNHCQYVGWGNQMICNKKYHFVIPSKETMAAFLKLEGGGYAFPEKESFSHLVELQGHVLHGFFHSNGFGHLLSLNGIETGSDLTGHQVMDLWDRLCTGLKARKIGLNDASHKKGMELRLLHGVAKGEPWFGRWGYRFGSGTYGVTQKIYEKALESVRNIPLCLLNHHLTSLNRETPILLSKYQSLSTEPLITLSDLFRFMLHLHSRLPRDNYMSNSRNQIISIDSTNCRWSQKRIQMAIKVVIESLKRVEYRWISRQEVRDAARNYIGDTGLLDFVLKSLGNQVVGNYLVRRSLNPVKKVLEYSLEDISNLLPSSNNELITLQNQNSMGKMATNGHNKITRGQVMKDMFYFYKHILMDYKGVLGPIGGILNQIGMASRAILDAKYFIKEYHYIRDTSAKTLHLDRGEELGIFCTIAWKCHHHNNEIKVPPQECIVVKKDATLSEVYGEAERVFRDIYWELRDVVVESVVGGQIEITRVDEMALNGNKGLVLEGNVGMMMNIEVTKCYEDDDKKKDKRIECECGATEEDGERMVCCDICEVWQHTRCVGVQHNEEVPRIFLCQSCDQHLIPLSFLP.

Residues 614-664 (RIECECGATEEDGERMVCCDICEVWQHTRCVGVQHNEEVPRIFLCQSCDQH) form a PHD-type zinc finger.

As to expression, in closed flower buds, especially in anthers.

It localises to the nucleus. Transcriptional activator required for anther and post-meiotic pollen development and maturation. Seems to regulate inflorescence branching and floral development. May control tapetal development by directly regulating tapetal programmed cell death (PCD) and breakdown. Implicated in pollen cytosolic components and wall development (e.g. exine and intine formation). The sequence is that of PHD finger protein MALE STERILITY 1 (MS1) from Arabidopsis thaliana (Mouse-ear cress).